Consider the following 426-residue polypeptide: 4-hydroxy-3-methylbut-2-en-1-yl diphosphate synthase (flavodoxin) (426 aa).

[4Fe-4S] cluster-binding residues include C320, C323, C366, and E373.

The protein belongs to the IspG family. Requires [4Fe-4S] cluster as cofactor.

It catalyses the reaction (2E)-4-hydroxy-3-methylbut-2-enyl diphosphate + oxidized [flavodoxin] + H2O + 2 H(+) = 2-C-methyl-D-erythritol 2,4-cyclic diphosphate + reduced [flavodoxin]. It participates in isoprenoid biosynthesis; isopentenyl diphosphate biosynthesis via DXP pathway; isopentenyl diphosphate from 1-deoxy-D-xylulose 5-phosphate: step 5/6. Functionally, converts 2C-methyl-D-erythritol 2,4-cyclodiphosphate (ME-2,4cPP) into 1-hydroxy-2-methyl-2-(E)-butenyl 4-diphosphate. The sequence is that of 4-hydroxy-3-methylbut-2-en-1-yl diphosphate synthase (flavodoxin) from Wolbachia sp. subsp. Drosophila simulans (strain wRi).